The sequence spans 334 residues: Trans-3-hydroxy-L-proline dehydratase (334 aa).

The Proton acceptor role is filled by Cys-91. Substrate-binding positions include 92–93 (GH), Asp-250, and 255–256 (GT).

Belongs to the proline racemase family.

It catalyses the reaction trans-3-hydroxy-L-proline = 1-pyrroline-2-carboxylate + H2O. In terms of biological role, catalyzes the dehydration of trans-3-hydroxy-L-proline (t3LHyp) to Delta(1)-pyrroline-2-carboxylate (Pyr2C). Is likely involved in a degradation pathway that converts t3LHyp to L-proline. Can also catalyze the epimerization of trans-4-hydroxy-L-proline (t4LHyp) to cis-4-hydroxy-D-proline (c4DHyp) in vitro. Displays no proline racemase activity. This Bacillus thuringiensis subsp. konkukian (strain 97-27) protein is Trans-3-hydroxy-L-proline dehydratase.